The sequence spans 163 residues: 3-isopropylmalate dehydratase small subunit (163 aa).

Belongs to the LeuD family. LeuD type 2 subfamily. In terms of assembly, heterodimer of LeuC and LeuD.

The enzyme catalyses (2R,3S)-3-isopropylmalate = (2S)-2-isopropylmalate. It functions in the pathway amino-acid biosynthesis; L-leucine biosynthesis; L-leucine from 3-methyl-2-oxobutanoate: step 2/4. In terms of biological role, catalyzes the isomerization between 2-isopropylmalate and 3-isopropylmalate, via the formation of 2-isopropylmaleate. The polypeptide is 3-isopropylmalate dehydratase small subunit (Brachyspira hyodysenteriae (strain ATCC 49526 / WA1)).